The following is a 313-amino-acid chain: Ornithine carbamoyltransferase (313 aa).

Residues 57–60, Gln84, Arg108, and 135–138 each bind carbamoyl phosphate; these read STRT and HPTQ. L-ornithine contacts are provided by residues Asn167, Asp231, and 235–236; that span reads SM. Residues 272–273 and Arg300 each bind carbamoyl phosphate; that span reads CL.

The protein belongs to the aspartate/ornithine carbamoyltransferase superfamily. OTCase family.

Its subcellular location is the cytoplasm. The enzyme catalyses carbamoyl phosphate + L-ornithine = L-citrulline + phosphate + H(+). It participates in amino-acid biosynthesis; L-arginine biosynthesis; L-arginine from L-ornithine and carbamoyl phosphate: step 1/3. Reversibly catalyzes the transfer of the carbamoyl group from carbamoyl phosphate (CP) to the N(epsilon) atom of ornithine (ORN) to produce L-citrulline. The chain is Ornithine carbamoyltransferase from Caldanaerobacter subterraneus subsp. tengcongensis (strain DSM 15242 / JCM 11007 / NBRC 100824 / MB4) (Thermoanaerobacter tengcongensis).